Reading from the N-terminus, the 121-residue chain is Cell division protein FtsB (121 aa).

Topologically, residues 1–6 are cytoplasmic; sequence MRNWRW. A helical transmembrane segment spans residues 7–24; it reads LLLVLAVLLAWLQYRFWF. Over 25–121 the chain is Periplasmic; sequence GPGNSGEVMM…PEPIDPVDHP (97 aa). The stretch at 31–66 forms a coiled coil; sequence EVMMLEAQVAHQTQDNEGLRQRNQALAAEVKDLKDG. The tract at residues 92–121 is disordered; it reads EDAPLPAPASPEAPAPPQQAPEPIDPVDHP. The span at 96–115 shows a compositional bias: pro residues; the sequence is LPAPASPEAPAPPQQAPEPI.

It belongs to the FtsB family. As to quaternary structure, part of a complex composed of FtsB, FtsL and FtsQ.

It is found in the cell inner membrane. Functionally, essential cell division protein. May link together the upstream cell division proteins, which are predominantly cytoplasmic, with the downstream cell division proteins, which are predominantly periplasmic. This chain is Cell division protein FtsB, found in Xanthomonas euvesicatoria pv. vesicatoria (strain 85-10) (Xanthomonas campestris pv. vesicatoria).